The chain runs to 175 residues: General odorant-binding protein 84a (175 aa).

An N-terminal signal peptide occupies residues 1-24 (MYSALVRACAVIAFLILSPNCARA). Cystine bridges form between cysteine 103/cysteine 151 and cysteine 140/cysteine 160.

Present only in a small number of hairs scattered over the surface of the funiculus.

The protein resides in the secreted. This Drosophila melanogaster (Fruit fly) protein is General odorant-binding protein 84a (Obp84a).